The sequence spans 118 residues: MKFQPLGERVLVERLEEENKTSSGIIIPDNAKEKPLMGVVKVVSHKISEGCKCVKEGDVIAFGKYKGAEIVLDGVEYMVLELEDILGIVSSGSCCHTNSHDHKHAKEHEACCHDHKKH.

It belongs to the GroES chaperonin family. Heptamer of 7 subunits arranged in a ring. Interacts with the chaperonin GroEL.

It is found in the cytoplasm. In terms of biological role, together with the chaperonin GroEL, plays an essential role in assisting protein folding. The GroEL-GroES system forms a nano-cage that allows encapsulation of the non-native substrate proteins and provides a physical environment optimized to promote and accelerate protein folding. GroES binds to the apical surface of the GroEL ring, thereby capping the opening of the GroEL channel. This is Co-chaperonin GroES from Helicobacter pylori (strain Shi470).